The following is a 291-amino-acid chain: Small ribosomal subunit protein uS2 (291 aa).

The segment at 254–291 is disordered; the sequence is RTSNRDNKNNKNNNNTDNTDNAASIKEEDLIGGSNNEN. A compositionally biased stretch (low complexity) spans 263–277; sequence NKNNNNTDNTDNAAS.

This sequence belongs to the universal ribosomal protein uS2 family.

This chain is Small ribosomal subunit protein uS2, found in Ehrlichia canis (strain Jake).